Consider the following 886-residue polypeptide: Leucine--tRNA ligase (886 aa).

The short motif at 46–56 is the 'HIGH' region element; sequence PYPSGKLHMGH. The 'KMSKS' region signature appears at 638-642; that stretch reads TMSKS. Lys-641 is an ATP binding site.

Belongs to the class-I aminoacyl-tRNA synthetase family.

Its subcellular location is the cytoplasm. It catalyses the reaction tRNA(Leu) + L-leucine + ATP = L-leucyl-tRNA(Leu) + AMP + diphosphate. The chain is Leucine--tRNA ligase from Polaromonas sp. (strain JS666 / ATCC BAA-500).